A 309-amino-acid polypeptide reads, in one-letter code: Ribose-phosphate pyrophosphokinase (309 aa).

Residues 42-44 and 102-103 contribute to the ATP site; these read DEE and RQ. Residues histidine 136 and aspartate 175 each contribute to the Mg(2+) site. Residue lysine 199 is part of the active site. D-ribose 5-phosphate is bound by residues arginine 201, aspartate 226, and 230–234; that span reads STGGT.

The protein belongs to the ribose-phosphate pyrophosphokinase family. Class III (archaeal) subfamily. Requires Mg(2+) as cofactor.

Its subcellular location is the cytoplasm. It carries out the reaction D-ribose 5-phosphate + ATP = 5-phospho-alpha-D-ribose 1-diphosphate + AMP + H(+). The protein operates within metabolic intermediate biosynthesis; 5-phospho-alpha-D-ribose 1-diphosphate biosynthesis; 5-phospho-alpha-D-ribose 1-diphosphate from D-ribose 5-phosphate (route I): step 1/1. Its function is as follows. Involved in the biosynthesis of the central metabolite phospho-alpha-D-ribosyl-1-pyrophosphate (PRPP) via the transfer of pyrophosphoryl group from ATP to 1-hydroxyl of ribose-5-phosphate (Rib-5-P). This chain is Ribose-phosphate pyrophosphokinase, found in Aeropyrum pernix (strain ATCC 700893 / DSM 11879 / JCM 9820 / NBRC 100138 / K1).